The sequence spans 425 residues: MSDHQSRGQDFSLEADSELRFEIEQKDAKVLVTLVNGFAELFGTELVKKKKYEFGMGAKVAIFTYQGCVLHVTGKMDVCYISKETPMVQYVNCHAALEQFRTEAEEKDRRGPVAMVVGPTDVGKSTLCRILLNYAVRVGRRPLYADLDVGQGAIAISGNVATILIERPASVEEGFPKTAPLVYHFGHKSPSGNSVLYNAVVSKMAEVTLQSLNGNKRTKSSGIIVNTCGWVKGHGYAHLLHAARAYGACAIFVLDQERLYNELLRDVPSSVHVVLLPKSGGVVERSKELRHECRDQRIKEYFYGNARAPFYPFSFEVKFQELRLYKIGAPPLPDSCMPIGMKAEDNKTKVVAVTPTPALIHHVLALSFAESVDDDVIGTNIAGFCCVTEVDMERQVVMLLSPQPRPLPPNALLLWSELQFMDNHT.

ATP contacts are provided by residues Glu18, Lys59, and 121 to 126; that span reads DVGKST.

It belongs to the Clp1 family. Clp1 subfamily.

Its subcellular location is the nucleus. Its function is as follows. Required for endonucleolytic cleavage during polyadenylation-dependent pre-mRNA 3'-end formation. This Drosophila persimilis (Fruit fly) protein is Protein CLP1 homolog (cbc).